The sequence spans 365 residues: Prostaglandin E2 receptor EP3 subtype (365 aa).

Residues 1-22 are disordered; that stretch reads MASMWAPEHSAEAHSNLSSTTD. Residues 1–30 are Extracellular-facing; it reads MASMWAPEHSAEAHSNLSSTTDDCGSVSVA. The segment covering 13-22 has biased composition (polar residues); that stretch reads AHSNLSSTTD. N-linked (GlcNAc...) asparagine glycosylation occurs at Asn-16. A helical transmembrane segment spans residues 31 to 55; the sequence is FPITMMVTGFVGNALAMLLVSRSYR. Over 56–68 the chain is Cytoplasmic; the sequence is RRESKRKKSFLLC. A helical membrane pass occupies residues 69 to 89; sequence IGWLALTDLVGQLLTSPVVIL. The Extracellular segment spans residues 90-108; sequence VYLSQRRWEQLDPSGRLCT. Cys-107 and Cys-184 are oxidised to a cystine. A helical transmembrane segment spans residues 109-130; the sequence is FFGLTMTVFGLSSLLVASAMAV. Topologically, residues 131-151 are cytoplasmic; it reads ERALAIRAPHWYASHMKTRAT. The chain crosses the membrane as a helical span at residues 152–173; the sequence is PVLLGVWLSVLAFALLPVLGVG. The Extracellular segment spans residues 174-203; that stretch reads RYSVQWPGTWCFISTGPAGNETDPAREPGS. Asn-193 carries N-linked (GlcNAc...) asparagine glycosylation. A helical transmembrane segment spans residues 204–229; it reads VAFASAFACLGLLALVVTFACNLATI. At 230 to 259 the chain is on the cytoplasmic side; sequence KALVSRCRAKAAVSQSSAQWGRITTETAIQ. The helical transmembrane segment at 260 to 283 threads the bilayer; that stretch reads LMGIMCVLSVCWSPLLIMMLKMIF. Residues 284 to 303 are Extracellular-facing; the sequence is NQMSVEQCKTQMGKEKECNS. The chain crosses the membrane as a helical span at residues 304–325; the sequence is FLIAVRLASLNQILDPWVYLLL. Residues 326 to 365 lie on the Cytoplasmic side of the membrane; the sequence is RKILLRKFCQIRDHTNYASSSTSLPCPGSSALMWSDQLER.

The protein belongs to the G-protein coupled receptor 1 family. As to quaternary structure, interacts (via C-terminus) with MKLN1. Post-translationally, ligand binding is affected by cAMP-dependent phosphorylation in brain membranes. Detected in platelets. Kidney, uterus, and mastocytoma cells, and in a lesser amount in brain, thymus, lung, heart, stomach and spleen.

It localises to the cell membrane. Functionally, receptor for prostaglandin E2 (PGE2). Required for normal development of fever in response to pyrinogens, including IL1B, prostaglandin E2 and bacterial lipopolysaccharide (LPS). Required for normal potentiation of platelet aggregation by prostaglandin E2, and thus plays a role in the regulation of blood coagulation. Required for increased HCO3(-) secretion in the duodenum in response to mucosal acidification, and thereby contributes to the protection of the mucosa against acid-induced ulceration. Not required for normal kidney function, normal urine volume and osmolality. Its function is as follows. Receptor for prostaglandin E2 (PGE2); ligand binding activates a signaling cascade via G(i) proteins that leads to inhibition of adenylate cyclase. Shows high agonist-independent constitutive inhibition of adenylate cyclase. In terms of biological role, receptor for prostaglandin E2 (PGE2); ligand binding activates a signaling cascade via G(i) proteins that leads to inhibition of adenylate cyclase. Requires much higher ligand concentrations than isoform Alpha for activation. Does not display agonist-independent constitutive inhibition of adenylate cyclase. Receptor for prostaglandin E2 (PGE2); ligand binding can activate several distinct signaling cascades, resulting in activation or inhibition of adenylate cyclase. This Mus musculus (Mouse) protein is Prostaglandin E2 receptor EP3 subtype (Ptger3).